We begin with the raw amino-acid sequence, 144 residues long: Gas vesicle protein I1 (144 aa).

The segment at 1–144 (MSDKQQQKHK…SPTEDEVNDE (144 aa)) is disordered. 2 stretches are compositionally biased toward basic residues: residues 7–17 (QKHKQKARQAR) and 26–46 (KARR…TRNR). Polar residues predominate over residues 75–94 (MPPQKSNAENAVRNSHSTVP). Residues 122–136 (SEASAPSDESASGSP) show a composition bias toward low complexity.

The protein belongs to the gas vesicle GvpI family. GvpF to GvpM interact with each other in vitro, and may form multi-subunit complex(es). Interacts with GvpC1 and GvpO.

The protein resides in the gas vesicle. Its function is as follows. Proteins GvpF to GvpM might be involved in nucleating gas vesicle formation. A minor component of the gas vesicle. Gas vesicles are hollow, gas filled proteinaceous nanostructures found in several microbial planktonic microorganisms. They allow positioning of halobacteria at the optimal depth for growth in the poorly aerated, shallow brine pools of their habitat. Expression of a 9.5 kb p-vac DNA fragment containing 2 divergently transcribed regions (gvpD-gvpE-gvpF-gvpG-gvpH-gvpI-gvpJ-gvpK-gvpL-gvpM and gvpA-gvpC-gvpN-gvpO) allows H.volcanii to produce gas vesicles. A similar region restores gas vesicle production in H.halobium without the p-vac locus, but it still has the c-vac locus. This is Gas vesicle protein I1 (gvpI11) from Halobacterium salinarum (strain ATCC 700922 / JCM 11081 / NRC-1) (Halobacterium halobium).